The primary structure comprises 387 residues: Succinate--CoA ligase [ADP-forming] subunit beta (387 aa).

ATP is bound by residues Lys46, 53–55, Glu99, Ala102, and Glu107; that span reads GRG. Positions 199 and 213 each coordinate Mg(2+). Substrate is bound by residues Asn264 and 321–323; that span reads GIV.

This sequence belongs to the succinate/malate CoA ligase beta subunit family. Heterotetramer of two alpha and two beta subunits. Requires Mg(2+) as cofactor.

It carries out the reaction succinate + ATP + CoA = succinyl-CoA + ADP + phosphate. The catalysed reaction is GTP + succinate + CoA = succinyl-CoA + GDP + phosphate. It participates in carbohydrate metabolism; tricarboxylic acid cycle; succinate from succinyl-CoA (ligase route): step 1/1. Its function is as follows. Succinyl-CoA synthetase functions in the citric acid cycle (TCA), coupling the hydrolysis of succinyl-CoA to the synthesis of either ATP or GTP and thus represents the only step of substrate-level phosphorylation in the TCA. The beta subunit provides nucleotide specificity of the enzyme and binds the substrate succinate, while the binding sites for coenzyme A and phosphate are found in the alpha subunit. The chain is Succinate--CoA ligase [ADP-forming] subunit beta from Campylobacter jejuni (strain RM1221).